A 207-amino-acid polypeptide reads, in one-letter code: Small ribosomal subunit protein uS4c (207 aa).

Residues 92–153 (MRLDNILFRL…PKIYQSIITK (62 aa)) enclose the S4 RNA-binding domain.

This sequence belongs to the universal ribosomal protein uS4 family. In terms of assembly, part of the 30S ribosomal subunit. Contacts protein S5. The interaction surface between S4 and S5 is involved in control of translational fidelity.

The protein resides in the plastid. It is found in the chloroplast. In terms of biological role, one of the primary rRNA binding proteins, it binds directly to 16S rRNA where it nucleates assembly of the body of the 30S subunit. Functionally, with S5 and S12 plays an important role in translational accuracy. This Equisetum bogotense (Horsetail) protein is Small ribosomal subunit protein uS4c (rps4).